A 637-amino-acid polypeptide reads, in one-letter code: Chaperone protein HtpG (637 aa).

The interval 1–345 is a; substrate-binding; the sequence is MSQQETHGFQ…SNDLPLNVSR (345 aa). A b region spans residues 346-562; the sequence is EILQDNHVTK…EGEMSTQMIK (217 aa). The c stretch occupies residues 563 to 637; sequence LMQAAGQPVP…MNQMLLANMK (75 aa).

Belongs to the heat shock protein 90 family. Homodimer.

The protein localises to the cytoplasm. Functionally, molecular chaperone. Has ATPase activity. This chain is Chaperone protein HtpG, found in Shewanella baltica (strain OS185).